The following is a 295-amino-acid chain: Hydroxyquinol 1,2-dioxygenase (295 aa).

Residues Tyr-165, Tyr-200, His-224, and His-226 each contribute to the Fe cation site.

It belongs to the intradiol ring-cleavage dioxygenase family. The cofactor is Fe(3+).

It catalyses the reaction benzene-1,2,4-triol + O2 = maleylacetate + 2 H(+). Its pathway is aromatic compound metabolism. In terms of biological role, involved in the gamma-resorcylate (2,6-dihydroxybenzoate) catabolism. Catalyzes the conversion of hydroxyquinol to malelylacetate. The chain is Hydroxyquinol 1,2-dioxygenase from Rhizobium sp. (strain MTP-10005).